The primary structure comprises 512 residues: Reduced folate transporter (512 aa).

M1 bears the N-acetylmethionine mark. Topologically, residues M1–V29 are cytoplasmic. A helical transmembrane segment spans residues F30–P50. Folate is bound by residues I48 and T49. The Extracellular segment spans residues Y51–V62. N56 carries N-linked (GlcNAc...) asparagine glycosylation. Residues T63 to T85 form a helical membrane-spanning segment. The Cytoplasmic segment spans residues D86 to R89. The chain crosses the membrane as a helical span at residues Y90 to L110. The Extracellular segment spans residues G111 to V114. Residues V115–Y137 traverse the membrane as a helical segment. Folate-binding residues include E121 and R131. Topologically, residues I138 to A151 are cytoplasmic. Residues S152–G176 form a helical membrane-spanning segment. A folate-binding site is contributed by V162. At G177–Y181 the chain is on the extracellular side. Residues M182–F200 traverse the membrane as a helical segment. Residues L201–Q266 lie on the Cytoplasmic side of the membrane. The helical transmembrane segment at L267–W292 threads the bilayer. Folate-binding residues include Y281, Y282, and Y286. Residues K293–N300 are Extracellular-facing. Residues Y301–V323 traverse the membrane as a helical segment. Residues N324–L329 are Cytoplasmic-facing. Residues W330–F350 traverse the membrane as a helical segment. Over Q351–P353 the chain is Extracellular. The helical transmembrane segment at D354–T377 threads the bilayer. Folate contacts are provided by R366 and Q370. Over F378–L391 the chain is Cytoplasmic. The chain crosses the membrane as a helical span at residues V392–R415. A required for substrate-binding region spans residues A400–S412. Residues G416 to Q423 lie on the Extracellular side of the membrane. The chain crosses the membrane as a helical span at residues Q424–L448. The Cytoplasmic portion of the chain corresponds to R449–A512. Phosphoserine is present on residues S466, S471, and S476. A disordered region spans residues D479 to A512. Positions E500–A512 are enriched in basic and acidic residues.

This sequence belongs to the reduced folate carrier (RFC) transporter (TC 2.A.48) family. Expressed in liver, heart, brain, spleen, lung and skeletal muscle.

Its subcellular location is the cell membrane. It localises to the apical cell membrane. The protein resides in the basolateral cell membrane. It carries out the reaction 5-amino-1-(5-phospho-beta-D-ribosyl)imidazole-4-carboxamide(in) + (6S)-5-methyl-5,6,7,8-tetrahydrofolate(out) = 5-amino-1-(5-phospho-beta-D-ribosyl)imidazole-4-carboxamide(out) + (6S)-5-methyl-5,6,7,8-tetrahydrofolate(in). Functionally, antiporter that mediates the import of reduced folates, driven by the export of organic anions. Also acts as an importer of immunoreactive cyclic dinucleotides, but with a lower transporter activity. Mechanistically, acts as a secondary active transporter, which exports intracellular organic anions down their concentration gradients to facilitate the uptake of its substrates. Has high affinity for N5-methyltetrahydrofolate, the predominant circulating form of folate. Also mediates the import of antifolate drug methotrexate. 5-amino-4-imidazolecarboxamide riboside (AICAR), when phosphorylated to AICAR monophosphate, can serve as an organic anion for antiporter activity. This chain is Reduced folate transporter, found in Rattus norvegicus (Rat).